Here is a 383-residue protein sequence, read N- to C-terminus: Putative dehydratase subunit YjiM (383 aa).

It belongs to the FldB/FldC dehydratase alpha/beta subunit family.

In Escherichia coli (strain K12), this protein is Putative dehydratase subunit YjiM (yjiM).